The chain runs to 242 residues: tRNA (guanine-N(1)-)-methyltransferase (242 aa).

S-adenosyl-L-methionine-binding positions include glycine 114 and 134–139; that span reads IGDFVL. Over residues 223-233 the composition is skewed to basic and acidic residues; the sequence is RRDLLPEHSKN. The segment at 223–242 is disordered; the sequence is RRDLLPEHSKNNPEQTNKLS.

It belongs to the RNA methyltransferase TrmD family. As to quaternary structure, homodimer.

The protein localises to the cytoplasm. The enzyme catalyses guanosine(37) in tRNA + S-adenosyl-L-methionine = N(1)-methylguanosine(37) in tRNA + S-adenosyl-L-homocysteine + H(+). In terms of biological role, specifically methylates guanosine-37 in various tRNAs. This Rhodopirellula baltica (strain DSM 10527 / NCIMB 13988 / SH1) protein is tRNA (guanine-N(1)-)-methyltransferase.